The following is a 185-amino-acid chain: Protein GrpE (185 aa).

The tract at residues 1–37 (MEEQEEKQYNQNIQDNEEGTQMREELQESTSAQQTLQ) is disordered. Over residues 28–37 (ESTSAQQTLQ) the composition is skewed to polar residues.

It belongs to the GrpE family. Homodimer.

The protein resides in the cytoplasm. Its function is as follows. Participates actively in the response to hyperosmotic and heat shock by preventing the aggregation of stress-denatured proteins, in association with DnaK and GrpE. It is the nucleotide exchange factor for DnaK and may function as a thermosensor. Unfolded proteins bind initially to DnaJ; upon interaction with the DnaJ-bound protein, DnaK hydrolyzes its bound ATP, resulting in the formation of a stable complex. GrpE releases ADP from DnaK; ATP binding to DnaK triggers the release of the substrate protein, thus completing the reaction cycle. Several rounds of ATP-dependent interactions between DnaJ, DnaK and GrpE are required for fully efficient folding. The protein is Protein GrpE of Helicobacter hepaticus (strain ATCC 51449 / 3B1).